A 172-amino-acid polypeptide reads, in one-letter code: Large ribosomal subunit protein uL10 (172 aa).

The protein belongs to the universal ribosomal protein uL10 family. In terms of assembly, part of the ribosomal stalk of the 50S ribosomal subunit. The N-terminus interacts with L11 and the large rRNA to form the base of the stalk. The C-terminus forms an elongated spine to which L12 dimers bind in a sequential fashion forming a multimeric L10(L12)X complex.

In terms of biological role, forms part of the ribosomal stalk, playing a central role in the interaction of the ribosome with GTP-bound translation factors. This chain is Large ribosomal subunit protein uL10, found in Rhodopseudomonas palustris (strain BisB5).